We begin with the raw amino-acid sequence, 174 residues long: MRFERNDLSGFLGKSFIYNYDQGWRYELYVKNATTIDYRVHSGIVGGRWVKDQTVHISRVGAAIYRVSWAEPTGTSVALTLNLEDYVVHGAIYFPRWIVDEPEKIACYQNDHLPLMEAYRDAGPIYPTHVIDSFATLIYMRDCGLNNEQVINCPPSELAEDYPFCLADKNLLPA.

The protein belongs to the PadC family.

In terms of biological role, catalyzes the decarboxylation of phenolic acids. The sequence is that of Probable phenolic acid decarboxylase (padC) from Vibrio cholerae serotype O1 (strain ATCC 39315 / El Tor Inaba N16961).